The following is a 168-amino-acid chain: Ribosome maturation factor RimP (168 aa).

Belongs to the RimP family.

It is found in the cytoplasm. Its function is as follows. Required for maturation of 30S ribosomal subunits. This is Ribosome maturation factor RimP from Bordetella bronchiseptica (strain ATCC BAA-588 / NCTC 13252 / RB50) (Alcaligenes bronchisepticus).